Reading from the N-terminus, the 172-residue chain is Small ribosomal subunit protein bS6 (172 aa).

The tract at residues 100–172 (LPAKRVVKTS…ENKEIEKKED (73 aa)) is disordered. A compositionally biased stretch (basic and acidic residues) spans 107-172 (KTSEKNVKED…ENKEIEKKED (66 aa)).

It belongs to the bacterial ribosomal protein bS6 family.

In terms of biological role, binds together with bS18 to 16S ribosomal RNA. The protein is Small ribosomal subunit protein bS6 of Prochlorococcus marinus (strain MIT 9211).